The primary structure comprises 704 residues: MEQERHEFSIDWAGRKLTVETGQLAKQANGAVLVRYGDTAVLSTATASKEPKDLPFFPLTVNYEERLYAAGKIPGGFIKREGRPSEKAILASRLIDRPIRPLFPEGFRNEVQVISIVMSVDQDCSSEMAAMVGSSLALSISDIPFEGPIAGVTVGRIDGQFVINPTQDQLEKSDIHLVVAGTKDAINMVEAGAEEVPEDVMLEAIMFGHNEIKRLIEFQEKIAAEVGKSKTDVVLKQVDPMLEQEVRVKAEEDLKQAVQVPEKHARQDAIEAVMDKVLETYEDNEDVPLSEVNEILHKIVKEEVRRLITVEKIRPDGREIDEIRPLSSQVGILPRTHGSGLFTRGQTQALSICTLGALGDVQILDGLGIEESKRFMHHYNFPQFSVGETGPIRGPGRREIGHGALGERALEPVIPSEQDFPYTIRLVSEVLESNGSTSQASICASTLAMMDAGVPIKAPVAGIAMGLVKQDEHVSVLTDIQGMEDALGDMDFKVAGTRKGVTALQMDIKISGIDRAILEQALEQARKGRMIILDNMLEAISESRSELSPYAPKILTMTINPDKIRDVIGPSGKMINKIIEDTGVKIDIEQDGTIYISSADTNMNNKAREIIEDIVREVEVGQMYLGTVKRIEKFGAFVELFKGKDGLVHISQLAEERVNKVEDVVKIGDEILVKVMEIDNQGRVNLSRKAVLKEQKKAEEQNQK.

Positions 485 and 491 each coordinate Mg(2+). Residues 552 to 611 (PKILTMTINPDKIRDVIGPSGKMINKIIEDTGVKIDIEQDGTIYISSADTNMNNKAREII) form the KH domain. Residues 621–689 (GQMYLGTVKR…NQGRVNLSRK (69 aa)) enclose the S1 motif domain.

It belongs to the polyribonucleotide nucleotidyltransferase family. Mg(2+) serves as cofactor.

The protein localises to the cytoplasm. It catalyses the reaction RNA(n+1) + phosphate = RNA(n) + a ribonucleoside 5'-diphosphate. Its function is as follows. Involved in mRNA degradation. Catalyzes the phosphorolysis of single-stranded polyribonucleotides processively in the 3'- to 5'-direction. In Halalkalibacterium halodurans (strain ATCC BAA-125 / DSM 18197 / FERM 7344 / JCM 9153 / C-125) (Bacillus halodurans), this protein is Polyribonucleotide nucleotidyltransferase.